The following is a 282-amino-acid chain: NADPH-dependent 7-cyano-7-deazaguanine reductase (282 aa).

Substrate is bound at residue isoleucine 88–serine 90. Residue serine 90–lysine 91 coordinates NADPH. The active-site Thioimide intermediate is the cysteine 190. Residue aspartate 197 is the Proton donor of the active site. Histidine 229–glutamate 230 is a substrate binding site. Arginine 258 to glycine 259 contacts NADPH.

The protein belongs to the GTP cyclohydrolase I family. QueF type 2 subfamily. As to quaternary structure, homodimer.

It localises to the cytoplasm. It carries out the reaction 7-aminomethyl-7-carbaguanine + 2 NADP(+) = 7-cyano-7-deazaguanine + 2 NADPH + 3 H(+). Its pathway is tRNA modification; tRNA-queuosine biosynthesis. Catalyzes the NADPH-dependent reduction of 7-cyano-7-deazaguanine (preQ0) to 7-aminomethyl-7-deazaguanine (preQ1). This is NADPH-dependent 7-cyano-7-deazaguanine reductase from Shigella flexneri serotype 5b (strain 8401).